We begin with the raw amino-acid sequence, 264 residues long: Thymidylate synthase (264 aa).

Residues Arg-21 and 126–127 contribute to the dUMP site; that span reads RR. Cys-146 serves as the catalytic Nucleophile. Residues 166 to 169, Asn-177, and 207 to 209 contribute to the dUMP site; these read RSAD and HLY. Asp-169 lines the (6R)-5,10-methylene-5,6,7,8-tetrahydrofolate pocket. Position 263 (Ala-263) interacts with (6R)-5,10-methylene-5,6,7,8-tetrahydrofolate.

Belongs to the thymidylate synthase family. Bacterial-type ThyA subfamily. As to quaternary structure, homodimer.

Its subcellular location is the cytoplasm. The enzyme catalyses dUMP + (6R)-5,10-methylene-5,6,7,8-tetrahydrofolate = 7,8-dihydrofolate + dTMP. It participates in pyrimidine metabolism; dTTP biosynthesis. In terms of biological role, catalyzes the reductive methylation of 2'-deoxyuridine-5'-monophosphate (dUMP) to 2'-deoxythymidine-5'-monophosphate (dTMP) while utilizing 5,10-methylenetetrahydrofolate (mTHF) as the methyl donor and reductant in the reaction, yielding dihydrofolate (DHF) as a by-product. This enzymatic reaction provides an intracellular de novo source of dTMP, an essential precursor for DNA biosynthesis. This chain is Thymidylate synthase, found in Rhodopseudomonas palustris (strain BisB5).